A 723-amino-acid polypeptide reads, in one-letter code: Methionine--tRNA ligase (723 aa).

Positions 11-21 match the 'HIGH' region motif; that stretch reads PYANGPIHAGH. Zn(2+) contacts are provided by Cys143, Cys146, Cys156, and Cys159. Positions 344-348 match the 'KMSKS' region motif; it reads KFSTS. Position 347 (Thr347) interacts with ATP. Residues 623–723 enclose the tRNA-binding domain; it reads DFAKLDLRVG…KEVKLGAKVR (101 aa).

This sequence belongs to the class-I aminoacyl-tRNA synthetase family. MetG type 1 subfamily. In terms of assembly, homodimer. Requires Zn(2+) as cofactor.

Its subcellular location is the cytoplasm. It catalyses the reaction tRNA(Met) + L-methionine + ATP = L-methionyl-tRNA(Met) + AMP + diphosphate. Is required not only for elongation of protein synthesis but also for the initiation of all mRNA translation through initiator tRNA(fMet) aminoacylation. In Pyrococcus horikoshii (strain ATCC 700860 / DSM 12428 / JCM 9974 / NBRC 100139 / OT-3), this protein is Methionine--tRNA ligase.